A 335-amino-acid polypeptide reads, in one-letter code: Anthranilate phosphoribosyltransferase (335 aa).

5-phospho-alpha-D-ribose 1-diphosphate is bound by residues Gly-79, 82-83 (GD), Thr-87, 89-92 (NIST), 107-115 (KHCNQGVSS), and Ser-119. An anthranilate-binding site is contributed by Gly-79. Ser-91 is a binding site for Mg(2+). An anthranilate-binding site is contributed by Asn-110. Residue Arg-165 participates in anthranilate binding. Residues Asp-223 and Glu-224 each coordinate Mg(2+).

The protein belongs to the anthranilate phosphoribosyltransferase family. In terms of assembly, homodimer. Mg(2+) serves as cofactor.

The enzyme catalyses N-(5-phospho-beta-D-ribosyl)anthranilate + diphosphate = 5-phospho-alpha-D-ribose 1-diphosphate + anthranilate. Its pathway is amino-acid biosynthesis; L-tryptophan biosynthesis; L-tryptophan from chorismate: step 2/5. Functionally, catalyzes the transfer of the phosphoribosyl group of 5-phosphorylribose-1-pyrophosphate (PRPP) to anthranilate to yield N-(5'-phosphoribosyl)-anthranilate (PRA). This chain is Anthranilate phosphoribosyltransferase, found in Buchnera aphidicola subsp. Diuraphis noxia.